We begin with the raw amino-acid sequence, 125 residues long: Small ribosomal subunit protein uS13 (125 aa).

Belongs to the universal ribosomal protein uS13 family. As to quaternary structure, part of the 30S ribosomal subunit. Forms a loose heterodimer with protein S19. Forms two bridges to the 50S subunit in the 70S ribosome.

Functionally, located at the top of the head of the 30S subunit, it contacts several helices of the 16S rRNA. In the 70S ribosome it contacts the 23S rRNA (bridge B1a) and protein L5 of the 50S subunit (bridge B1b), connecting the 2 subunits; these bridges are implicated in subunit movement. Contacts the tRNAs in the A and P-sites. This is Small ribosomal subunit protein uS13 from Rickettsia prowazekii (strain Madrid E).